We begin with the raw amino-acid sequence, 295 residues long: Protease HtpX (295 aa).

The next 2 helical transmembrane spans lie at 4–24 and 34–54; these read IVLFLLTNLAVMLVFGIILSL and GLMIMAGLFGFGGAFVSLLMS. A Zn(2+)-binding site is contributed by His-139. Glu-140 is an active-site residue. His-143 is a binding site for Zn(2+). Helical transmembrane passes span 147-167 and 194-214; these read GDMVTMTLLQGIVNTFVIFIS and IVYMVASMVLEIVFGILASII. Glu-223 lines the Zn(2+) pocket.

The protein belongs to the peptidase M48B family. Zn(2+) is required as a cofactor.

Its subcellular location is the cell inner membrane. This chain is Protease HtpX, found in Photorhabdus laumondii subsp. laumondii (strain DSM 15139 / CIP 105565 / TT01) (Photorhabdus luminescens subsp. laumondii).